The chain runs to 763 residues: Phosphoglycerol transferase I (763 aa).

Transmembrane regions (helical) follow at residues 1-21 (MSEL…AWKA), 26-46 (WWFA…ITLY), 77-97 (ILPG…LGWI), and 108-128 (FGYS…SPAF).

This sequence belongs to the OpgB family.

Its subcellular location is the cell inner membrane. The catalysed reaction is a phosphatidylglycerol + a membrane-derived-oligosaccharide D-glucose = a 1,2-diacyl-sn-glycerol + a membrane-derived-oligosaccharide 6-(glycerophospho)-D-glucose.. It participates in glycan metabolism; osmoregulated periplasmic glucan (OPG) biosynthesis. Transfers a phosphoglycerol residue from phosphatidylglycerol to the membrane-bound nascent glucan backbones. The chain is Phosphoglycerol transferase I from Escherichia fergusonii (strain ATCC 35469 / DSM 13698 / CCUG 18766 / IAM 14443 / JCM 21226 / LMG 7866 / NBRC 102419 / NCTC 12128 / CDC 0568-73).